The chain runs to 581 residues: Arginine--tRNA ligase (581 aa).

A 'HIGH' region motif is present at residues 122-132 (PNVAKPMHVGH).

Belongs to the class-I aminoacyl-tRNA synthetase family. In terms of assembly, monomer.

It localises to the cytoplasm. The catalysed reaction is tRNA(Arg) + L-arginine + ATP = L-arginyl-tRNA(Arg) + AMP + diphosphate. In Francisella tularensis subsp. holarctica (strain FTNF002-00 / FTA), this protein is Arginine--tRNA ligase.